Here is a 371-residue protein sequence, read N- to C-terminus: ETS-related transcription factor Elf-3 (371 aa).

Residues 46–132 form the PNT domain; it reads NPQMSLEGTE…AQLRDLTSSS (87 aa). The 9aaTAD signature appears at 137–145; that stretch reads SWIIELLEK. The tract at residues 173-251 is disordered; sequence GQQASPYHPG…HGKRKRGRPR (79 aa). The segment covering 181–216 has biased composition (low complexity); that stretch reads PGSCGAGAPSPGSSDVSTAGTGASRSSHSSDSGGSD. Basic and acidic residues predominate over residues 231–241; sequence GFRDCKKGDPK. The segment covering 242–251 has biased composition (basic residues); that stretch reads HGKRKRGRPR. The segment at residues 273 to 355 is a DNA-binding region (ETS); that stretch reads THLWEFIRDI…DGRRLVYKFG (83 aa).

This sequence belongs to the ETS family. Interacts with TBP. Interacts with CREBBP and EP300; these act as transcriptional coactivators of ELF3 and positively modulate its function. Interacts with XRCC5/KU86 and XRCC6/KU70; these inhibit the ability of ELF3 to bind DNA and negatively modulate its transcriptional activity. Associated with CLND7 and POU2F3. Interacts with ZNF768. As to expression, expressed exclusively in tissues containing a high content of terminally differentiated epithelial cells including mammary gland, colon, trachea, kidney, prostate, uterus, stomach and skin.

The protein localises to the cytoplasm. It is found in the nucleus. Transcriptional activator that binds and transactivates ETS sequences containing the consensus nucleotide core sequence GGA[AT]. Acts synergistically with POU2F3 to transactivate the SPRR2A promoter and with RUNX1 to transactivate the ANGPT1 promoter. Also transactivates collagenase, CCL20, CLND7, FLG, KRT8, NOS2, PTGS2, SPRR2B, TGFBR2 and TGM3 promoters. Represses KRT4 promoter activity. Involved in mediating vascular inflammation. May play an important role in epithelial cell differentiation and tumorigenesis. May be a critical downstream effector of the ERBB2 signaling pathway. May be associated with mammary gland development and involution. Plays an important role in the regulation of transcription with TATA-less promoters in preimplantation embryos, which is essential in preimplantation development. The polypeptide is ETS-related transcription factor Elf-3 (Homo sapiens (Human)).